Reading from the N-terminus, the 235-residue chain is Aspartate/glutamate leucyltransferase (235 aa).

Belongs to the R-transferase family. Bpt subfamily.

Its subcellular location is the cytoplasm. The enzyme catalyses N-terminal L-glutamyl-[protein] + L-leucyl-tRNA(Leu) = N-terminal L-leucyl-L-glutamyl-[protein] + tRNA(Leu) + H(+). The catalysed reaction is N-terminal L-aspartyl-[protein] + L-leucyl-tRNA(Leu) = N-terminal L-leucyl-L-aspartyl-[protein] + tRNA(Leu) + H(+). Functions in the N-end rule pathway of protein degradation where it conjugates Leu from its aminoacyl-tRNA to the N-termini of proteins containing an N-terminal aspartate or glutamate. The polypeptide is Aspartate/glutamate leucyltransferase (Pseudomonas savastanoi pv. phaseolicola (strain 1448A / Race 6) (Pseudomonas syringae pv. phaseolicola (strain 1448A / Race 6))).